Here is a 428-residue protein sequence, read N- to C-terminus: Serine--tRNA ligase (428 aa).

Position 231-233 (231-233 (TSE)) interacts with L-serine. ATP contacts are provided by residues 262–264 (RRE) and Val278. Glu285 is an L-serine binding site. Residue 349–352 (ELTS) participates in ATP binding. Thr384 is a binding site for L-serine.

This sequence belongs to the class-II aminoacyl-tRNA synthetase family. Type-1 seryl-tRNA synthetase subfamily. Homodimer. The tRNA molecule binds across the dimer.

The protein localises to the cytoplasm. It carries out the reaction tRNA(Ser) + L-serine + ATP = L-seryl-tRNA(Ser) + AMP + diphosphate + H(+). It catalyses the reaction tRNA(Sec) + L-serine + ATP = L-seryl-tRNA(Sec) + AMP + diphosphate + H(+). It functions in the pathway aminoacyl-tRNA biosynthesis; selenocysteinyl-tRNA(Sec) biosynthesis; L-seryl-tRNA(Sec) from L-serine and tRNA(Sec): step 1/1. In terms of biological role, catalyzes the attachment of serine to tRNA(Ser). Is also able to aminoacylate tRNA(Sec) with serine, to form the misacylated tRNA L-seryl-tRNA(Sec), which will be further converted into selenocysteinyl-tRNA(Sec). The chain is Serine--tRNA ligase from Bifidobacterium longum subsp. infantis (strain ATCC 15697 / DSM 20088 / JCM 1222 / NCTC 11817 / S12).